The primary structure comprises 1147 residues: Putative ATP-dependent RNA helicase L377 (1147 aa).

Positions 108–315 constitute a Helicase ATP-binding domain; the sequence is INPNTPYRGL…VELINYLRPK (208 aa). 121-128 contacts ATP; the sequence is WGTGVGKS. A DEAH box motif is present at residues 264-267; sequence DEAH.

This sequence belongs to the DEAD box helicase family. DEAH subfamily.

The protein resides in the virion. The enzyme catalyses ATP + H2O = ADP + phosphate + H(+). The protein is Putative ATP-dependent RNA helicase L377 of Acanthamoeba polyphaga (Amoeba).